The primary structure comprises 464 residues: Soluble pyridine nucleotide transhydrogenase (464 aa).

FAD is bound at residue 35-44 (DSRRQVGGNC).

It belongs to the class-I pyridine nucleotide-disulfide oxidoreductase family. Requires FAD as cofactor.

It localises to the cytoplasm. The enzyme catalyses NAD(+) + NADPH = NADH + NADP(+). Its function is as follows. Conversion of NADPH, generated by peripheral catabolic pathways, to NADH, which can enter the respiratory chain for energy generation. This chain is Soluble pyridine nucleotide transhydrogenase, found in Pseudomonas putida (strain W619).